We begin with the raw amino-acid sequence, 322 residues long: Phosphatidylserine decarboxylase proenzyme (322 aa).

Residues aspartate 90, histidine 147, and serine 254 each act as charge relay system; for autoendoproteolytic cleavage activity in the active site. Residue serine 254 is the Schiff-base intermediate with substrate; via pyruvic acid; for decarboxylase activity of the active site. At serine 254 the chain carries Pyruvic acid (Ser); by autocatalysis. A disordered region spans residues 293 to 322 (PDAEPAPLPAEEIEAEHDASPLVDDKKDQV). The segment covering 308-322 (EHDASPLVDDKKDQV) has biased composition (basic and acidic residues).

This sequence belongs to the phosphatidylserine decarboxylase family. PSD-B subfamily. Prokaryotic type I sub-subfamily. As to quaternary structure, heterodimer of a large membrane-associated beta subunit and a small pyruvoyl-containing alpha subunit. Pyruvate is required as a cofactor. In terms of processing, is synthesized initially as an inactive proenzyme. Formation of the active enzyme involves a self-maturation process in which the active site pyruvoyl group is generated from an internal serine residue via an autocatalytic post-translational modification. Two non-identical subunits are generated from the proenzyme in this reaction, and the pyruvate is formed at the N-terminus of the alpha chain, which is derived from the carboxyl end of the proenzyme. The autoendoproteolytic cleavage occurs by a canonical serine protease mechanism, in which the side chain hydroxyl group of the serine supplies its oxygen atom to form the C-terminus of the beta chain, while the remainder of the serine residue undergoes an oxidative deamination to produce ammonia and the pyruvoyl prosthetic group on the alpha chain. During this reaction, the Ser that is part of the protease active site of the proenzyme becomes the pyruvoyl prosthetic group, which constitutes an essential element of the active site of the mature decarboxylase.

It localises to the cell membrane. The enzyme catalyses a 1,2-diacyl-sn-glycero-3-phospho-L-serine + H(+) = a 1,2-diacyl-sn-glycero-3-phosphoethanolamine + CO2. It participates in phospholipid metabolism; phosphatidylethanolamine biosynthesis; phosphatidylethanolamine from CDP-diacylglycerol: step 2/2. Functionally, catalyzes the formation of phosphatidylethanolamine (PtdEtn) from phosphatidylserine (PtdSer). The protein is Phosphatidylserine decarboxylase proenzyme of Escherichia coli (strain 55989 / EAEC).